We begin with the raw amino-acid sequence, 949 residues long: Glycine dehydrogenase (decarboxylating) (949 aa).

Position 699 is an N6-(pyridoxal phosphate)lysine (lysine 699).

It belongs to the GcvP family. As to quaternary structure, the glycine cleavage system is composed of four proteins: P, T, L and H. Requires pyridoxal 5'-phosphate as cofactor.

It catalyses the reaction N(6)-[(R)-lipoyl]-L-lysyl-[glycine-cleavage complex H protein] + glycine + H(+) = N(6)-[(R)-S(8)-aminomethyldihydrolipoyl]-L-lysyl-[glycine-cleavage complex H protein] + CO2. Its function is as follows. The glycine cleavage system catalyzes the degradation of glycine. The P protein binds the alpha-amino group of glycine through its pyridoxal phosphate cofactor; CO(2) is released and the remaining methylamine moiety is then transferred to the lipoamide cofactor of the H protein. The chain is Glycine dehydrogenase (decarboxylating) from Roseobacter denitrificans (strain ATCC 33942 / OCh 114) (Erythrobacter sp. (strain OCh 114)).